We begin with the raw amino-acid sequence, 118 residues long: Disulfide bond formation protein (118 aa).

The signal sequence occupies residues 1–27 (MRAKWLWMTAVGSLLITVLTAWGWAAA). In terms of domain architecture, Thioredoxin spans 28 to 114 (SSQDSKIVYV…VAEAVLRSFF (87 aa)). Cysteine 42 and cysteine 45 form a disulfide bridge.

Belongs to the thioredoxin family.

The protein resides in the secreted. Stimulates the oxidation and reduction of disulfide bonds in vitro. The protein is Disulfide bond formation protein (bdb) of Brevibacillus choshinensis.